The sequence spans 651 residues: PTS system N-acetylglucosamine-specific EIICBA component (651 aa).

One can recognise a PTS EIIC type-1 domain in the interval 1 to 371; the sequence is MNILGFFQRL…FNLKTPGRED (371 aa). Helical transmembrane passes span 16–36, 40–60, 70–90, 92–112, 132–152, 165–185, 192–212, 232–252, 264–284, 285–305, 308–328, and 339–359; these read LPIA…PDLL, FIAQ…AIGV, GSAA…MVTI, PEIN…GAVY, FVPI…GYVW, WIVS…RLLI, VLNT…GTVF, GFFP…YLAA, LLSV…EFLF, LFLA…SLFI, ALGI…VLMY, and MLLV…SAVI. One can recognise a PTS EIIB type-1 domain in the interval 390–472; sequence TQLATSYIAA…KKVVTRGPVA (83 aa). The Phosphocysteine intermediate; for EIIB activity role is filled by Cys-412. Phosphocysteine; by EIIA is present on Cys-412. In terms of domain architecture, PTS EIIA type-1 spans 519 to 623; that stretch reads DEAFASKAVG…SMISPVVCSN (105 aa). Zn(2+)-binding residues include His-556 and His-571. Catalysis depends on His-571, which acts as the Tele-phosphohistidine intermediate; for EIIA activity. His-571 is subject to Phosphohistidine; by HPr.

Zn(2+) is required as a cofactor.

Its subcellular location is the cell inner membrane. The enzyme catalyses N(pros)-phospho-L-histidyl-[protein] + N-acetyl-D-glucosamine(out) = N-acetyl-D-glucosamine 6-phosphate(in) + L-histidyl-[protein]. In terms of biological role, the phosphoenolpyruvate-dependent sugar phosphotransferase system (sugar PTS), a major carbohydrate active transport system, catalyzes the phosphorylation of incoming sugar substrates concomitantly with their translocation across the cell membrane. This system is involved in N-acetylglucosamine transport. This chain is PTS system N-acetylglucosamine-specific EIICBA component (nagE), found in Klebsiella pneumoniae.